A 510-amino-acid polypeptide reads, in one-letter code: uncharacterized protein (510 aa).

4 disordered regions span residues 1 to 154 (MGSP…ATFL), 208 to 227 (DGNHGNQAKNSGPAETGDLA), 234 to 276 (TRES…QGIL), and 368 to 480 (NFYT…GCPR). The residue at position 43 (S43) is a Phosphoserine. Residues 50–60 (PLVSQQDTSEA) are compositionally biased toward polar residues. The segment covering 78–92 (EEERLGSPEDEKMDG) has biased composition (basic and acidic residues). S84 bears the Phosphoserine mark. Composition is skewed to polar residues over residues 97-109 (SQPSVETEQQVAN) and 118-135 (QPSSESFCAETETGSNRR). At S120 the chain carries Phosphoserine. The span at 139–151 (ASGSEEAKAASAA) shows a compositional bias: low complexity. Residues 243-255 (SSLLTTTRGLTSG) are compositionally biased toward low complexity. A compositionally biased stretch (basic and acidic residues) spans 379 to 395 (RTKELQLVAKEDTDSTR). Positions 414-441 (SVHQEFSSGDINTRSLQDPGNSQSSGLS) are enriched in polar residues.

This is an uncharacterized protein from Rattus norvegicus (Rat).